The sequence spans 398 residues: Potassium channel subfamily K member 4 (398 aa).

The Cytoplasmic segment spans residues 1–3; the sequence is MRS. Residues 4-24 form a helical membrane-spanning segment; sequence TTLLALLALVLLYLVSGALVF. At 25–88 the chain is on the extracellular side; that stretch reads QALEQPHEQQ…WTNSSNHSSA (64 aa). N-linked (GlcNAc...) asparagine glycans are attached at residues N81 and N84. An intramembrane region (helical) is located at residues 89 to 103; sequence WNLGSAFFFSGTIIT. 4 residues coordinate K(+): T104, I105, G106, and Y107. Residues 104–109 are selectivity filter 1; sequence TIGYGN. The stretch at 104–110 is an intramembrane region; sequence TIGYGNI. The Extracellular portion of the chain corresponds to 111–118; it reads VLHTDAGR. A helical membrane pass occupies residues 119–151; it reads LFCIFYALVGIPLFGMLLAGVGDRLGSSLRRGI. Residues 152 to 173 lie on the Cytoplasmic side of the membrane; it reads GHIEAIFLKWHVPPGLVRSLSA. Residues 174–195 traverse the membrane as a helical segment; sequence VLFLLIGCLLFVLTPTFVFSYM. The Extracellular portion of the chain corresponds to 196-200; it reads ESWSK. The segment at residues 201 to 214 is an intramembrane region (helical); that stretch reads LEAIYFVIVTLTTV. T213, V214, G215, and F216 together coordinate K(+). The segment at 213–218 is selectivity filter 2; that stretch reads TVGFGD. The stretch at 215–220 is an intramembrane region; the sequence is GFGDYV. At 221–234 the chain is on the extracellular side; it reads PGDGTGQNSPAYQP. A helical transmembrane segment spans residues 235–261; the sequence is LVWFWILFGLAYFASVLTTIGNWLRAV. At 262-398 the chain is on the cytoplasmic side; that stretch reads SRRTRAEMGG…GRLRDKAVPV (137 aa). The segment covering 282 to 292 has biased composition (polar residues); that stretch reads TVTARVTQRTG. The tract at residues 282–398 is disordered; sequence TVTARVTQRT…GRLRDKAVPV (117 aa). Residues 370–389 show a composition bias toward basic residues; that stretch reads PRGRRRPNPSKKPSRPRGPG.

Belongs to the two pore domain potassium channel (TC 1.A.1.8) family. As to quaternary structure, homodimer; disulfide-linked. Forms heterodimers with other 2-pore domain K(+) channel subunits, such as KCNK2 and KCNK10. N-glycosylated. In terms of tissue distribution, expressed in brain, spinal cord and eye. Not detected in heart, skeletal muscle, liver, lungs, kidney and testis.

Its subcellular location is the cell membrane. The protein localises to the cell projection. The protein resides in the axon. It carries out the reaction K(+)(in) = K(+)(out). The enzyme catalyses Rb(+)(in) = Rb(+)(out). The catalysed reaction is Cs(+)(in) = Cs(+)(out). Activated by arachidonic acid and other polyunsaturated fatty acids. Not affected by volatile general anesthetics such as chloroform, diethyl ether, halothane and isoflurane. Activated at intracellular and extracellular basic pHs. Its function is as follows. K(+) channel that conducts voltage-dependent outward rectifying currents upon membrane depolarization. Voltage sensing is coupled to K(+) electrochemical gradient in an 'ion flux gating' mode where outward but not inward ion flow opens the gate. Converts to voltage-independent 'leak' conductance mode upon stimulation by various stimuli including mechanical membrane stretch, basic pH, temperature and lipids. Homo- and heterodimerizes to form functional channels with distinct regulatory and gating properties. At trigeminal A-beta afferent nerves, the heterodimer of KCNK2/TREK-1 and KCNK4/TRAAK is mostly coexpressed at nodes of Ranvier where it conducts voltage-independent mechanosensitive and thermosensitive currents, allowing rapid action potential repolarization, high speed and high frequence saltatory conduction on myelinated nerves to ensure prompt sensory responses. Permeable to other monovalent cations such as Rb(+) and Cs(+). The polypeptide is Potassium channel subfamily K member 4 (Mus musculus (Mouse)).